A 199-amino-acid chain; its full sequence is Recombination protein RecR (199 aa).

A C4-type zinc finger spans residues 57-72; sequence CSICGNITEGDPCSIC. One can recognise a Toprim domain in the interval 80 to 176; it reads THVLVVEQPK…KVTRLAHGLS (97 aa).

Belongs to the RecR family.

Functionally, may play a role in DNA repair. It seems to be involved in an RecBC-independent recombinational process of DNA repair. It may act with RecF and RecO. The chain is Recombination protein RecR from Levilactobacillus brevis (strain ATCC 367 / BCRC 12310 / CIP 105137 / JCM 1170 / LMG 11437 / NCIMB 947 / NCTC 947) (Lactobacillus brevis).